Reading from the N-terminus, the 192-residue chain is MAYLDEIQLKEMGFKSVGENVKISDKASFYGCDNISIGNNVRIDDFCVFSAGEGGIDIHDYIHIAVYSSIIGKGKVTISDYANISSRVSIYSSNEYYSGNYMSNPVVPSEYTNIHSGTVFIGKHVIIGCGSIVLPDVILHEGAAIGALSVVKEDCEAFTVNVGIPAKPISERSKKLLELESVFKPSAIGDNL.

Belongs to the transferase hexapeptide repeat family.

The enzyme catalyses dTDP-4-amino-4,6-dideoxy-alpha-D-glucose + acetyl-CoA = dTDP-4-acetamido-4,6-dideoxy-alpha-D-glucose + CoA + H(+). The protein operates within bacterial outer membrane biogenesis; lipopolysaccharide biosynthesis. Its function is as follows. Catalyzes the conversion of dTDP-4-amino-4,6-dideoxy-D-glucose (dTDP-D-Qui4N) to dTDP-4-acetamido-4,6-dideoxy-D-glucose (dTDP-D-Qui4NAc). The protein is dTDP-4-amino-4,6-dideoxy-D-glucose acyltransferase (vioB) of Escherichia coli.